Reading from the N-terminus, the 638-residue chain is Epithelial sodium channel subunit delta (638 aa).

Over residues Met1–Ala13 the composition is skewed to basic and acidic residues. The disordered stretch occupies residues Met1–Glu47. At Met1–Thr86 the chain is on the cytoplasmic side. Over residues Pro28–Pro41 the composition is skewed to pro residues. The helical transmembrane segment at Ser87–Phe107 threads the bilayer. Residues Glu108–Ser530 lie on the Extracellular side of the membrane. N-linked (GlcNAc...) asparagine glycosylation is found at Asn166 and Asn384. The chain crosses the membrane as a helical span at residues Leu531–Leu551. The Cytoplasmic portion of the chain corresponds to Asp552–Thr638. The segment at Arg574 to Met613 is disordered.

It belongs to the amiloride-sensitive sodium channel (TC 1.A.6) family. SCNN1D subfamily. As to quaternary structure, can form an alternative heterotrimeric epithelial sodium channel (ENaC), composed of a delta (SCNN1D), beta (SCNN1B), and gamma (SCNN1G) subunit, where the delta (SCNN1D) subunit replaces the alpha (SCNN1A) subunit.

It localises to the apical cell membrane. It catalyses the reaction Na(+)(in) = Na(+)(out). Originally identified and characterized by its inhibition by the diuretic drug amiloride. Its function is as follows. Potential alternative pore-forming subunit of the epithelial sodium channel (ENaC), capable of replacing the alpha/SCNN1A subunit, creating a more active channel with distinct properties. ENaC functions in epithelial tissues, where it facilitates the electrodiffusion of sodium ions from the extracellular fluid through the apical membrane of cells, with water following osmotically, regulating sodium balance and fluid homeostasis. This subunit could also function independently as a sodium channel or assemble into other tissue-specific heterotrimeric sodium channels. The polypeptide is Epithelial sodium channel subunit delta (Pan troglodytes (Chimpanzee)).